An 832-amino-acid polypeptide reads, in one-letter code: Translation initiation factor IF-2 (832 aa).

The disordered stretch occupies residues 1-249; the sequence is MSDDNDKPRT…GGGSSAPREK (249 aa). The span at 53-71 shows a compositional bias: pro residues; the sequence is TPAPAPEPAPEPAPAPAPA. The span at 89-144 shows a compositional bias: basic and acidic residues; the sequence is PQERVARLQREAEEERLKLAEDARKRDDQKAKQNADDEKKRQEENKKAEEEAEKQA. Low complexity predominate over residues 145-156; it reads AAEAEAAAAAEA. Positions 180-200 are enriched in basic and acidic residues; the sequence is PEPKRPEKKKEEKKPARGGAK. Positions 333–503 constitute a tr-type G domain; that stretch reads PRPPVVTIMG…ELQAELLELK (171 aa). Residues 342–349 are G1; it reads GHVDHGKT. 342-349 provides a ligand contact to GTP; it reads GHVDHGKT. Positions 367–371 are G2; sequence GITQH. A G3 region spans residues 389–392; sequence DTPG. GTP contacts are provided by residues 389–393 and 443–446; these read DTPGH and NKCD. The segment at 443–446 is G4; it reads NKCD. A G5 region spans residues 479–481; it reads SAT.

This sequence belongs to the TRAFAC class translation factor GTPase superfamily. Classic translation factor GTPase family. IF-2 subfamily.

Its subcellular location is the cytoplasm. Functionally, one of the essential components for the initiation of protein synthesis. Protects formylmethionyl-tRNA from spontaneous hydrolysis and promotes its binding to the 30S ribosomal subunits. Also involved in the hydrolysis of GTP during the formation of the 70S ribosomal complex. This is Translation initiation factor IF-2 from Erythrobacter litoralis (strain HTCC2594).